Reading from the N-terminus, the 168-residue chain is ATP synthase subunit b, chloroplastic (168 aa).

Residues 20–37 (LNLAVVLPIVFTLGRDTL) traverse the membrane as a helical segment.

The protein belongs to the ATPase B chain family. As to quaternary structure, F-type ATPases have 2 components, F(1) - the catalytic core - and F(0) - the membrane proton channel. F(1) has five subunits: alpha(3), beta(3), gamma(1), delta(1), epsilon(1). F(0) has four main subunits: a(1), b(1), b'(1) and c(10-14). The alpha and beta chains form an alternating ring which encloses part of the gamma chain. F(1) is attached to F(0) by a central stalk formed by the gamma and epsilon chains, while a peripheral stalk is formed by the delta, b and b' chains.

It localises to the plastid. Its subcellular location is the chloroplast thylakoid membrane. Functionally, f(1)F(0) ATP synthase produces ATP from ADP in the presence of a proton or sodium gradient. F-type ATPases consist of two structural domains, F(1) containing the extramembraneous catalytic core and F(0) containing the membrane proton channel, linked together by a central stalk and a peripheral stalk. During catalysis, ATP synthesis in the catalytic domain of F(1) is coupled via a rotary mechanism of the central stalk subunits to proton translocation. Component of the F(0) channel, it forms part of the peripheral stalk, linking F(1) to F(0). This Ostreococcus tauri protein is ATP synthase subunit b, chloroplastic.